The following is a 389-amino-acid chain: Alanine racemase (389 aa).

K48 serves as the catalytic Proton acceptor; specific for D-alanine. N6-(pyridoxal phosphate)lysine is present on K48. Residue R144 coordinates substrate. Y281 serves as the catalytic Proton acceptor; specific for L-alanine. M329 contacts substrate.

It belongs to the alanine racemase family. Pyridoxal 5'-phosphate is required as a cofactor.

The enzyme catalyses L-alanine = D-alanine. The protein operates within amino-acid biosynthesis; D-alanine biosynthesis; D-alanine from L-alanine: step 1/1. Functionally, catalyzes the interconversion of L-alanine and D-alanine. May also act on other amino acids. The protein is Alanine racemase (alr) of Leptospira interrogans serogroup Icterohaemorrhagiae serovar Lai (strain 56601).